The following is a 381-amino-acid chain: MTHASNTHPVTELTKELIARPSVTPLDEGCQTLMAERLAAIGFNIEPMVFEDTTNMWARRGNEGPVFCFAGHTDVVPAGDLSRWHTPPFEPTIIDGYLYGRGAADMKGSLAAMIVATERFVAKHPNHPGSIAFLITSDEEGPFINGTTRVIDTLEARNEKITWALVGEPSSTLKLGDVVKNGRRGSLTANLTVKGIQGHVAYPHLADNPIHKAAPFLAELSQTHWDNGNEFFPPTSMQIANINGGTGASNVIPGTLEVMFNFRYSTEVTAEILIERVEALLTAHELDYDISWTFNGLPFLTGEGPLLDATRHAIRQITGYDTDPQTTGGTSDGRFIAPTGAKVLELGPVNATIHKVNECVKIDDLEQLALCYEVILEQLLC.

Histidine 72 is a Zn(2+) binding site. Aspartate 74 is an active-site residue. Aspartate 105 contributes to the Zn(2+) binding site. The Proton acceptor role is filled by glutamate 139. 3 residues coordinate Zn(2+): glutamate 140, glutamate 168, and histidine 354.

This sequence belongs to the peptidase M20A family. DapE subfamily. As to quaternary structure, homodimer. Zn(2+) serves as cofactor. Requires Co(2+) as cofactor.

It carries out the reaction N-succinyl-(2S,6S)-2,6-diaminopimelate + H2O = (2S,6S)-2,6-diaminopimelate + succinate. It participates in amino-acid biosynthesis; L-lysine biosynthesis via DAP pathway; LL-2,6-diaminopimelate from (S)-tetrahydrodipicolinate (succinylase route): step 3/3. Its function is as follows. Catalyzes the hydrolysis of N-succinyl-L,L-diaminopimelic acid (SDAP), forming succinate and LL-2,6-diaminopimelate (DAP), an intermediate involved in the bacterial biosynthesis of lysine and meso-diaminopimelic acid, an essential component of bacterial cell walls. The protein is Succinyl-diaminopimelate desuccinylase of Shewanella sp. (strain MR-7).